The primary structure comprises 266 residues: GTP-binding protein Rhes (266 aa).

GTP is bound at residue G26 to S33. Residues Y48–H56 carry the Effector region motif. GTP is bound by residues D73–N77 and N140–D143. The tract at residues M189–A235 is interaction with GNB1, GNB2 and GNB3. At C263 the chain carries Cysteine methyl ester. C263 is lipidated: S-farnesyl cysteine. Residues S264 to Q266 constitute a propeptide, removed in mature form.

This sequence belongs to the small GTPase superfamily. RasD family. Monomer (Potential). Interacts with PIK3CA and UBE2I. Interacts with GNB1, GNB2 and GNB3. Farnesylated. Farnesylation is required for membrane targeting. In terms of tissue distribution, highly expressed in brain; prominently in the striatum and weakly in kidney, thyroid, lung, heart and testis. Not expressed in liver. Expressed in pancreatic cell lines and in a embryonic stem cell line.

The protein localises to the cell membrane. Functionally, GTPase signaling protein that binds to and hydrolyzes GTP. Regulates signaling pathways involving G-proteins-coupled receptor and heterotrimeric proteins such as GNB1, GNB2 and GNB3. May be involved in selected striatal competencies, mainly locomotor activity and motor coordination. In Mus musculus (Mouse), this protein is GTP-binding protein Rhes (Rasd2).